A 501-amino-acid polypeptide reads, in one-letter code: Probable cytochrome P450 28d2 (501 aa).

Cys-446 lines the heme pocket.

The protein belongs to the cytochrome P450 family. It depends on heme as a cofactor.

The protein localises to the endoplasmic reticulum membrane. It is found in the microsome membrane. In terms of biological role, may be involved in the metabolism of insect hormones and in the breakdown of synthetic insecticides. This Drosophila melanogaster (Fruit fly) protein is Probable cytochrome P450 28d2 (Cyp28d2).